The sequence spans 185 residues: p53 apoptosis effector related to PMP-22 (185 aa).

4 helical membrane passes run 13–33, 74–94, 105–125, and 143–163; these read WILP…IAAQ, VAAL…ISLV, LPFI…ALII, and WAYG…ILFC.

It belongs to the TMEM47 family.

The protein resides in the cell junction. It localises to the desmosome. It is found in the cell membrane. The protein localises to the cytoplasm. Its function is as follows. Component of intercellular desmosome junctions. Positively regulates apoptosis in the early-stage embryo in response to UV irradiation, this is partially dependent on tp53 activation. Required for the survival of cell populations in the developing notochord and skin, therefore required for normal embryogenesis beyond 30 hpf. Acts as a positive regulator of endothelial cell apoptosis in response to blood flow-derived shear stress. The sequence is that of p53 apoptosis effector related to PMP-22 from Danio rerio (Zebrafish).